Here is a 54-residue protein sequence, read N- to C-terminus: uncharacterized protein (54 aa).

An N-terminal signal peptide occupies residues 1 to 21 (MNSKQILSLSAFAMTIATAAA). Topologically, residues 22–29 (GNWNAGDT) are extracellular. A helical membrane pass occupies residues 30 to 50 (IALLIGIAMFFVLLLALLGWI). Residues 51–54 (SRKK) lie on the Cytoplasmic side of the membrane.

It is found in the membrane. This is an uncharacterized protein from Dictyostelium discoideum (Social amoeba).